The chain runs to 232 residues: Putative N-acetylmannosamine-6-phosphate 2-epimerase (232 aa).

This sequence belongs to the NanE family.

It catalyses the reaction an N-acyl-D-glucosamine 6-phosphate = an N-acyl-D-mannosamine 6-phosphate. It participates in amino-sugar metabolism; N-acetylneuraminate degradation; D-fructose 6-phosphate from N-acetylneuraminate: step 3/5. In terms of biological role, converts N-acetylmannosamine-6-phosphate (ManNAc-6-P) to N-acetylglucosamine-6-phosphate (GlcNAc-6-P). The chain is Putative N-acetylmannosamine-6-phosphate 2-epimerase from Proteus mirabilis (strain HI4320).